The following is a 295-amino-acid chain: 2-methylisocitrate lyase (295 aa).

45 to 47 contributes to the substrate binding site; it reads SGG. Mg(2+)-binding residues include aspartate 85 and aspartate 87. Residues 123–124, arginine 158, glutamate 188, 210–212, arginine 241, and arginine 270 contribute to the substrate site; these read CG and NIT.

Belongs to the isocitrate lyase/PEP mutase superfamily. Methylisocitrate lyase family. As to quaternary structure, homotetramer; dimer of dimers. Requires Mg(2+) as cofactor.

It carries out the reaction (2S,3R)-3-hydroxybutane-1,2,3-tricarboxylate = pyruvate + succinate. It participates in organic acid metabolism; propanoate degradation. Functionally, involved in the catabolism of short chain fatty acids (SCFA) via the 2-methylcitrate cycle I (propionate degradation route). Catalyzes the thermodynamically favored C-C bond cleavage of (2R,3S)-2-methylisocitrate to yield pyruvate and succinate via an alpha-carboxy-carbanion intermediate. This is 2-methylisocitrate lyase from Salmonella typhimurium (strain LT2 / SGSC1412 / ATCC 700720).